We begin with the raw amino-acid sequence, 280 residues long: Shikimate dehydrogenase (NADP(+)) (280 aa).

Residues 15-17 and Thr-62 each bind shikimate; that span reads SLS. Lys-66 serves as the catalytic Proton acceptor. Shikimate contacts are provided by Asn-88 and Asp-104. NADP(+)-binding positions include 128 to 132, 151 to 156, and Ile-222; these read GAGGA and NRTEGR. Tyr-224 contributes to the shikimate binding site. Gly-245 is a binding site for NADP(+).

The protein belongs to the shikimate dehydrogenase family. Homodimer.

The enzyme catalyses shikimate + NADP(+) = 3-dehydroshikimate + NADPH + H(+). It functions in the pathway metabolic intermediate biosynthesis; chorismate biosynthesis; chorismate from D-erythrose 4-phosphate and phosphoenolpyruvate: step 4/7. In terms of biological role, involved in the biosynthesis of the chorismate, which leads to the biosynthesis of aromatic amino acids. Catalyzes the reversible NADPH linked reduction of 3-dehydroshikimate (DHSA) to yield shikimate (SA). This chain is Shikimate dehydrogenase (NADP(+)), found in Methanosarcina barkeri (strain Fusaro / DSM 804).